The sequence spans 318 residues: Taste receptor type 2 member 7 (318 aa).

Over 1–9 (MTDKVQTTL) the chain is Extracellular. Residues 10–30 (LFLAIGEFSVGILGNAFIGLV) traverse the membrane as a helical segment. At 31-55 (NCMDWVKKRKIASIDLILTSLAISR) the chain is on the cytoplasmic side. Residues 56–76 (ICLLCVILLDCFMLVLYPDVY) form a helical membrane-spanning segment. The Extracellular portion of the chain corresponds to 77–94 (ATGKQMRIIDFFWTLTNH). Residues 95–115 (LSIWFATCLSIYYFFKIANFF) form a helical membrane-spanning segment. Residues 116–128 (HPLFLWMKWRIDR) lie on the Cytoplasmic side of the membrane. Residues 129 to 149 (VISWILLGCMVLSVFINLPAT) form a helical membrane-spanning segment. The Extracellular segment spans residues 150-187 (ENLNADFRRCVKAKRKTNLTWSCRVTKAQHASTKLFLN). Asparagine 167 carries N-linked (GlcNAc...) asparagine glycosylation. Residues 188-208 (LVTLLPFSVCLMSFFLLILSL) traverse the membrane as a helical segment. Over 209–235 (WRHIRRMQLSATGCRDPSTEAHVRALK) the chain is Cytoplasmic. Residues 236–256 (AVISFLLLFIAYYLSFLIATS) traverse the membrane as a helical segment. Topologically, residues 257-266 (SYFIPETELA) are extracellular. Residues 267–287 (VIFGEFIALIYPSSHSFILIL) traverse the membrane as a helical segment. The Cytoplasmic segment spans residues 288–318 (GNSKLRRASLKVLWTVMSILKGRKFQQHKQI).

Belongs to the G-protein coupled receptor T2R family.

It is found in the membrane. Gustducin-coupled receptor implicated in the perception of bitter compounds in the oral cavity and the gastrointestinal tract. Signals through PLCB2 and the calcium-regulated cation channel TRPM5. The sequence is that of Taste receptor type 2 member 7 (TAS2R7) from Macaca mulatta (Rhesus macaque).